The chain runs to 43 residues: uncharacterized protein (43 aa).

The disordered stretch occupies residues Gln13–Ile43.

This is an uncharacterized protein from Clover yellow mosaic virus (CYMV).